Here is a 465-residue protein sequence, read N- to C-terminus: Methionine aminopeptidase 2-2 (465 aa).

The span at 1–11 (MGSKTPHNHRR) shows a compositional bias: basic residues. Residues 1–89 (MGSKTPHNHR…KKKKNTKELE (89 aa)) form a disordered region. The segment covering 43-54 (GESEGGEDEDDD) has biased composition (acidic residues). Basic residues predominate over residues 73–84 (RNKRKKKKKKKN). H217 serves as a coordination point for substrate. Positions 238, 249, and 318 each coordinate a divalent metal cation. H326 serves as a coordination point for substrate. E351 and E446 together coordinate a divalent metal cation.

Belongs to the peptidase M24A family. Methionine aminopeptidase eukaryotic type 2 subfamily. Co(2+) is required as a cofactor. The cofactor is Zn(2+). It depends on Mn(2+) as a cofactor. Requires Fe(2+) as cofactor.

The protein resides in the cytoplasm. It catalyses the reaction Release of N-terminal amino acids, preferentially methionine, from peptides and arylamides.. Cotranslationally removes the N-terminal methionine from nascent proteins. The N-terminal methionine is often cleaved when the second residue in the primary sequence is small and uncharged (Met-Ala-, Cys, Gly, Pro, Ser, Thr, or Val). The polypeptide is Methionine aminopeptidase 2-2 (Ajellomyces capsulatus (strain G186AR / H82 / ATCC MYA-2454 / RMSCC 2432) (Darling's disease fungus)).